Here is a 381-residue protein sequence, read N- to C-terminus: Queuine tRNA-ribosyltransferase (381 aa).

The Proton acceptor role is filled by Asp96. Residues 96 to 100 (DSGGF), Asp150, Gln193, and Gly220 each bind substrate. Positions 251–257 (GVGSPDS) are RNA binding. Catalysis depends on Asp270, which acts as the Nucleophile. An RNA binding; important for wobble base 34 recognition region spans residues 275 to 279 (TRIAR). 4 residues coordinate Zn(2+): Cys308, Cys310, Cys313, and His339.

The protein belongs to the queuine tRNA-ribosyltransferase family. In terms of assembly, homodimer. Within each dimer, one monomer is responsible for RNA recognition and catalysis, while the other monomer binds to the replacement base PreQ1. Zn(2+) serves as cofactor.

It catalyses the reaction 7-aminomethyl-7-carbaguanine + guanosine(34) in tRNA = 7-aminomethyl-7-carbaguanosine(34) in tRNA + guanine. It participates in tRNA modification; tRNA-queuosine biosynthesis. In terms of biological role, catalyzes the base-exchange of a guanine (G) residue with the queuine precursor 7-aminomethyl-7-deazaguanine (PreQ1) at position 34 (anticodon wobble position) in tRNAs with GU(N) anticodons (tRNA-Asp, -Asn, -His and -Tyr). Catalysis occurs through a double-displacement mechanism. The nucleophile active site attacks the C1' of nucleotide 34 to detach the guanine base from the RNA, forming a covalent enzyme-RNA intermediate. The proton acceptor active site deprotonates the incoming PreQ1, allowing a nucleophilic attack on the C1' of the ribose to form the product. After dissociation, two additional enzymatic reactions on the tRNA convert PreQ1 to queuine (Q), resulting in the hypermodified nucleoside queuosine (7-(((4,5-cis-dihydroxy-2-cyclopenten-1-yl)amino)methyl)-7-deazaguanosine). The protein is Queuine tRNA-ribosyltransferase of Bacillus licheniformis (strain ATCC 14580 / DSM 13 / JCM 2505 / CCUG 7422 / NBRC 12200 / NCIMB 9375 / NCTC 10341 / NRRL NRS-1264 / Gibson 46).